Consider the following 426-residue polypeptide: Serine--tRNA ligase (426 aa).

Position 231-233 (231-233 (TSE)) interacts with L-serine. 262-264 (RSE) serves as a coordination point for ATP. E285 provides a ligand contact to L-serine. 349–352 (EISS) is an ATP binding site. Residue S385 participates in L-serine binding.

This sequence belongs to the class-II aminoacyl-tRNA synthetase family. Type-1 seryl-tRNA synthetase subfamily. As to quaternary structure, homodimer. The tRNA molecule binds across the dimer.

The protein resides in the cytoplasm. The catalysed reaction is tRNA(Ser) + L-serine + ATP = L-seryl-tRNA(Ser) + AMP + diphosphate + H(+). It catalyses the reaction tRNA(Sec) + L-serine + ATP = L-seryl-tRNA(Sec) + AMP + diphosphate + H(+). The protein operates within aminoacyl-tRNA biosynthesis; selenocysteinyl-tRNA(Sec) biosynthesis; L-seryl-tRNA(Sec) from L-serine and tRNA(Sec): step 1/1. Functionally, catalyzes the attachment of serine to tRNA(Ser). Is also able to aminoacylate tRNA(Sec) with serine, to form the misacylated tRNA L-seryl-tRNA(Sec), which will be further converted into selenocysteinyl-tRNA(Sec). In Legionella pneumophila subsp. pneumophila (strain Philadelphia 1 / ATCC 33152 / DSM 7513), this protein is Serine--tRNA ligase.